Consider the following 434-residue polypeptide: Glutamate-1-semialdehyde 2,1-aminomutase 2 (434 aa).

Lys-269 carries the N6-(pyridoxal phosphate)lysine modification.

It belongs to the class-III pyridoxal-phosphate-dependent aminotransferase family. HemL subfamily. Homodimer. Pyridoxal 5'-phosphate serves as cofactor.

The protein localises to the cytoplasm. It catalyses the reaction (S)-4-amino-5-oxopentanoate = 5-aminolevulinate. The protein operates within porphyrin-containing compound metabolism; protoporphyrin-IX biosynthesis; 5-aminolevulinate from L-glutamyl-tRNA(Glu): step 2/2. The chain is Glutamate-1-semialdehyde 2,1-aminomutase 2 from Exiguobacterium sp. (strain ATCC BAA-1283 / AT1b).